A 504-amino-acid chain; its full sequence is MSFSVDVLANIAIELQRGIGHQDRFQRLITTLRQVLECDASALLRYDSRQFIPLAIDGLAKDVLGRRFALEGHPRLEAIARAGDVVRFPADSELPDPYDGLIPGQESLKVHACVGLPLFAGQNLIGALTLDGMQPDQFDVFSDEELRLIAALAAGALSNALLIEQLESQNMLPGDAAPFEAVKQTQMIGLSPGMTQLKKEIEIVAASDLNVLISGETGTGKELVAKAIHEASPRAVNPLVYLNCAALPESVAESELFGHVKGAFTGAISNRSGKFEMADNGTLFLDEIGELSLALQAKLLRVLQYGDIQRVGDDRSLRVDVRVLAATNRDLREEVLAGRFRADLFHRLSVFPLSVPPLRERGDDVILLAGYFCEQCRLRLGLSRVVLSARARNLLQHYNFPGNVRELEHAIHRAVVLARATRSGDEVILEAQHFAFPEVTLPPPEAAAVPIVKQNLREATEAFQRETIRQALAQNHHNWAASARMLETDVANLHRLAKRLGLKD.

At Asp-57 the chain carries 4-aspartylphosphate. Residues 187–416 form the Sigma-54 factor interaction domain; that stretch reads MIGLSPGMTQ…LEHAIHRAVV (230 aa). ATP is bound by residues 215–222 and 278–287; these read GETGTGKE and ADNGTLFLDE. Positions 479-498 form a DNA-binding region, H-T-H motif; the sequence is WAASARMLETDVANLHRLAK.

Its pathway is nitrogen metabolism; nitric oxide reduction. In terms of biological role, required for the expression of anaerobic nitric oxide (NO) reductase, acts as a transcriptional activator for at least the norVW operon. Activation also requires sigma-54. This Escherichia coli (strain SMS-3-5 / SECEC) protein is Anaerobic nitric oxide reductase transcription regulator NorR.